We begin with the raw amino-acid sequence, 470 residues long: V-type ATP synthase beta chain (470 aa).

Belongs to the ATPase alpha/beta chains family.

In terms of biological role, produces ATP from ADP in the presence of a proton gradient across the membrane. The V-type beta chain is a regulatory subunit. This chain is V-type ATP synthase beta chain, found in Deinococcus geothermalis (strain DSM 11300 / CIP 105573 / AG-3a).